We begin with the raw amino-acid sequence, 260 residues long: 2-amino-5-formylamino-6-ribosylaminopyrimidin-4(3H)-one 5'-monophosphate deformylase (260 aa).

Residues Glu-33, His-35, Asp-44, and His-112 each coordinate Fe cation.

Belongs to the creatininase superfamily. FAPy deformylase family. As to quaternary structure, homodimer. It depends on Fe(2+) as a cofactor. Zn(2+) is required as a cofactor.

It catalyses the reaction 2-amino-5-formylamino-6-(5-phospho-D-ribosylamino)pyrimidin-4(3H)-one + H2O = 2,5-diamino-6-(1-D-ribosylamino)pyrimidin-4(3H)-one 5'-phosphate + formate + H(+). It functions in the pathway cofactor biosynthesis; coenzyme F420 biosynthesis. It participates in cofactor biosynthesis; riboflavin biosynthesis. In terms of biological role, catalyzes the hydrolysis of the formamide of 2-amino-5-formylamino-6-ribosylamino-4(3H)-pyrimidinone 5'-monophosphate (FAPy) to form 2,5-diamino-6-ribosylamino-4(3H)-pyrimidinone 5'-phosphate (APy). The sequence is that of 2-amino-5-formylamino-6-ribosylaminopyrimidin-4(3H)-one 5'-monophosphate deformylase from Methanococcus voltae (strain ATCC BAA-1334 / A3).